Reading from the N-terminus, the 125-residue chain is MPGRHVSRVRALYKRVLQLHRVLPPDLKSLGDQYVKDEFRRHKTVGSDEAQRFLQEWEVYATALLQQANENRQNSTGKACFGTFLPEEKLNDFRDEQIGQLQELMQEATKPNRQFSISESMKPKF.

A mitochondrion-targeting transit peptide spans 1 to 30; sequence MPGRHVSRVRALYKRVLQLHRVLPPDLKSL.

The protein belongs to the complex I LYR family. SDHAF3 subfamily. Interacts with SDHB within an SDHA-SDHB subcomplex.

The protein resides in the mitochondrion matrix. Functionally, plays an essential role in the assembly of succinate dehydrogenase (SDH), an enzyme complex (also referred to as respiratory complex II) that is a component of both the tricarboxylic acid (TCA) cycle and the mitochondrial electron transport chain, and which couples the oxidation of succinate to fumarate with the reduction of ubiquinone (coenzyme Q) to ubiquinol. Promotes maturation of the iron-sulfur protein subunit SDHB of the SDH catalytic dimer, protecting it from the deleterious effects of oxidants. May act together with SDHAF1. This chain is Succinate dehydrogenase assembly factor 3, mitochondrial, found in Homo sapiens (Human).